The primary structure comprises 545 residues: MLPINNNFSLPQNSFYNTISGTYADYFSAWDKWEKQALPGEERDEAVSRLKECLINNSDELRLDRLNLSSLPDNLPAQITLLNVSYNQLTNLPELPVTLKKLYSASNKLSELPVLPPALESLQVQHNELENLPALPDSLLTMNISYNEIVSLPSLPLALKNLRATRNFLTELPAFSEGNNPVVREYFFDRNQISHIPESILNLRNECSIHISDNPLSSHALQALQRLTSSPDYHGPRIYFSMSDGQQNTLHRPLADAVTAWFPENKQSDVSQIWHAFEHEEHANTFSAFLDRLSDTVSARNTSGFREQVAAWLEKLSASAELRQQSFAVAADATESCEDRVALTWNNLRKTLLVHQASEGLFDNDTGALLSLGREMFRLEILEDIARDKVRTLHFVDEIEVYLAFQTMLAEKLQLSTAVKEMRFYGVSGVTANDLRTAEAMVRSREENEFTDWFSLWGPWHAVLKRTEADRWALAEEQKYEMLENEYPQRVADRLKASGLSGDADAEREAGAQVMRETEQQIYRQLTDEVLALRLSENGSQLHHS.

Positions 1-242 (MLPINNNFSL…YHGPRIYFSM (242 aa)) are interaction with target proteins. LRR repeat units follow at residues 57 to 77 (NSDE…NLPA), 78 to 99 (QITL…PVTL), 100 to 117 (KKLY…VLPP), 118 to 139 (ALES…PDSL), 140 to 157 (LTMN…SLPL), 158 to 179 (ALKN…SEGN), 182 to 203 (VVRE…ILNL), and 205 to 228 (NECS…QRLT). Residues 243–250 (SDGQQNTL) are linker. Residues 251–545 (HRPLADAVTA…SENGSQLHHS (295 aa)) are E3 ubiquitin-protein ligase catalytic domain. The NEL domain occupies 253-545 (PLADAVTAWF…SENGSQLHHS (293 aa)). Cys337 (glycyl thioester intermediate) is an active-site residue.

It belongs to the LRR-containing bacterial E3 ligase family. As to quaternary structure, also interacts with human and mouse U2AF1 (U2AF35). Ubiquitinated in the presence of host E1 ubiquitin-activating enzyme, E2 ubiquitin-conjugating enzyme and ubiquitin.

It is found in the secreted. The protein localises to the host cytoplasm. The protein resides in the host nucleus. The enzyme catalyses S-ubiquitinyl-[E2 ubiquitin-conjugating enzyme]-L-cysteine + [acceptor protein]-L-lysine = [E2 ubiquitin-conjugating enzyme]-L-cysteine + N(6)-ubiquitinyl-[acceptor protein]-L-lysine.. Its activity is regulated as follows. Exists in an autoinhibited state in the absence of substrate protein, due to interactions of the leucine-rich repeats with NEL domain. Is activated upon binding to a substrate protein. In terms of biological role, effector E3 ubiquitin ligase that interferes with host's ubiquitination pathway and modulates the acute inflammatory responses, thus facilitating bacterial colonization within the host cell. Interacts with IKBKG (NEMO) and TNIP1 (ABIN-1), a ubiquitin-binding adapter protein, which results in TNIP1-dependent 'Lys-27'-linked polyubiquitination of IKBKG. Consequently, polyubiquitinated IKBKG undergoes proteasome-dependent degradation, which perturbs NF-kappa-B activation during bacterial infection. Mediates polyubiquitination of host U2AF1, leading to its proteasomal degradation. Catalyzes 'Lys-48'-linked polyubiquitination and subsequent degradation of a subset of host guanylate-binding proteins (GBP1, GBP2, GBP4 and GBP6), thereby suppressing host cell defense. In contrast, host GBP3 and GBP7 are not ubiquitinated by IpaH9.8. Uses UBE2D2 (UBCH5B) as an E2 ubiquitin-conjugating enzyme. In Shigella boydii serotype 4 (strain Sb227), this protein is E3 ubiquitin-protein ligase ipaH9.8 (ipaH9.8).